We begin with the raw amino-acid sequence, 541 residues long: Chaperonin GroEL (541 aa).

ATP contacts are provided by residues 29 to 32, 86 to 90, G413, 477 to 479, and D493; these read TLGP, DGTTT, and DAL.

It belongs to the chaperonin (HSP60) family. Forms a cylinder of 14 subunits composed of two heptameric rings stacked back-to-back. Interacts with the co-chaperonin GroES.

The protein resides in the cytoplasm. It catalyses the reaction ATP + H2O + a folded polypeptide = ADP + phosphate + an unfolded polypeptide.. Functionally, together with its co-chaperonin GroES, plays an essential role in assisting protein folding. The GroEL-GroES system forms a nano-cage that allows encapsulation of the non-native substrate proteins and provides a physical environment optimized to promote and accelerate protein folding. The chain is Chaperonin GroEL from Clostridium beijerinckii (strain ATCC 51743 / NCIMB 8052) (Clostridium acetobutylicum).